Here is a 133-residue protein sequence, read N- to C-terminus: Fatty acid-binding protein, heart (133 aa).

Alanine 2 carries the post-translational modification N-acetylalanine. Threonine 8 carries the phosphothreonine modification. Residue tyrosine 20 is modified to Phosphotyrosine; by Tyr-kinases. Phosphoserine is present on serine 23. Threonine 30 is subject to Phosphothreonine. Phosphoserine is present on serine 83. 127 to 129 is a (9Z)-octadecenoate binding site; the sequence is RTY. Residue 127 to 129 participates in hexadecanoate binding; it reads RTY. Octadecanoate is bound at residue 127-129; that stretch reads RTY.

Belongs to the calycin superfamily. Fatty-acid binding protein (FABP) family.

The protein resides in the cytoplasm. In terms of biological role, FABPs are thought to play a role in the intracellular transport of long-chain fatty acids and their acyl-CoA esters. This is Fatty acid-binding protein, heart (Fabp3) from Mus musculus (Mouse).